The chain runs to 375 residues: Ribonuclease D (375 aa).

Residues Tyr3–Glu169 form the 3'-5' exonuclease domain. Residues Arg210–Ala289 enclose the HRDC domain.

The protein belongs to the RNase D family. A divalent metal cation serves as cofactor.

The protein resides in the cytoplasm. The catalysed reaction is Exonucleolytic cleavage that removes extra residues from the 3'-terminus of tRNA to produce 5'-mononucleotides.. Functionally, exonuclease involved in the 3' processing of various precursor tRNAs. Initiates hydrolysis at the 3'-terminus of an RNA molecule and releases 5'-mononucleotides. This is Ribonuclease D from Escherichia coli (strain K12).